The sequence spans 97 residues: Histone H1.C2 (97 aa).

The tract at residues 24-97 is disordered; that stretch reads AAVPPKKAAP…KKAVKKAPKK (74 aa). Basic residues predominate over residues 31–97; the sequence is AAPKKAVAKK…KKAVKKAPKK (67 aa).

It localises to the nucleus. The protein localises to the chromosome. The protein is Histone H1.C2 of Trypanosoma cruzi.